The following is an 849-amino-acid chain: Serrate RNA effector molecule homolog A (849 aa).

Disordered regions lie at residues 1-90 (MADS…HGSD) and 276-409 (KREA…PRPL). Composition is skewed to basic and acidic residues over residues 8 to 73 (YDRR…RHDL), 276 to 306 (KREA…KPEN), and 314 to 342 (EKPV…ETRK). The segment covering 354–364 (SDDGSDSESDT) has biased composition (acidic residues). A compositionally biased stretch (basic and acidic residues) spans 381–405 (RAEETPKKEEDTEKQKEKQKEDTVK).

This sequence belongs to the ARS2 family. As to quaternary structure, interacts ncbp1/cbp80.

The protein localises to the nucleus. The protein resides in the nucleoplasm. It is found in the cytoplasm. Its function is as follows. Acts as a mediator between the cap-binding complex (CBC) and the primary microRNAs (miRNAs) processing machinery during cell proliferation. Contributes to the stability and delivery of capped primary miRNA transcripts to the primary miRNA processing complex, thereby playing a role in RNA-mediated gene silencing (RNAi) by miRNAs. This is Serrate RNA effector molecule homolog A (srrt-a) from Xenopus laevis (African clawed frog).